A 712-amino-acid chain; its full sequence is Phosphatase and actin regulator 4 (712 aa).

Disordered regions lie at residues 1–22 (MGQADISRPVNPDGVEEIGQPT) and 90–405 (RGLL…EVPK). The stretch at 72–97 (EVLERKISMRKPREELVKRGLLLEDS) is one RPEL 1 repeat. Positions 114–124 (NGHTTLIGSTR) are enriched in polar residues. Residues Ser125, Ser127, Ser140, and Ser156 each carry the phosphoserine modification. Basic and acidic residues predominate over residues 136–152 (ERIASLRKPVPEEEPKK). Low complexity predominate over residues 198–230 (ATSSGSLARPSSSASTTAITTAPAATMAATNPA). The span at 233 to 243 (VHSSGPPSQAP) shows a compositional bias: polar residues. The segment covering 245–267 (TLPAAPASTHTTATLSLTHTGPA) has biased composition (low complexity). 3 positions are modified to phosphoserine: Ser282, Ser303, and Ser353. The segment covering 345-357 (SEPLLTPSSSPLP) has biased composition (low complexity). Positions 358–371 (AHIPPEPPQSPPFP) are enriched in pro residues. Phosphoserine is present on Ser436. A Phosphothreonine modification is found at Thr441. 7 positions are modified to phosphoserine: Ser452, Ser462, Ser473, Ser524, Ser526, Ser567, and Ser600. The interval 507-557 (VIPKLPQCLQEEEEGKESDSDSEGPIQYRDEEDEDESHHSALANKVKRKDT) is disordered. Residues 516-528 (QEEEEGKESDSDS) are compositionally biased toward acidic residues. 2 RPEL repeats span residues 593–618 (NTLIRRLSQRPTPEELEQRNILQPKN) and 631–656 (RRLTRKLSQRPTVAELLARKILRFNE). A disordered region spans residues 602-626 (RPTPEELEQRNILQPKNEADRQAEK). A Phosphoserine modification is found at Ser638.

It belongs to the phosphatase and actin regulator family. Binds PPP1CA and actin.

The protein resides in the cytoplasm. It localises to the cell projection. It is found in the lamellipodium. Its function is as follows. Regulator of protein phosphatase 1 (PP1) required for neural tube and optic fissure closure, and enteric neural crest cell (ENCCs) migration during development. Acts as an activator of PP1 by interacting with PPP1CA and preventing phosphorylation of PPP1CA at 'Thr-320'. During neural tube closure, localizes to the ventral neural tube and activates PP1, leading to down-regulate cell proliferation within cranial neural tissue and the neural retina. Also acts as a regulator of migration of enteric neural crest cells (ENCCs) by activating PP1, leading to dephosphorylation and subsequent activation of cofilin (COF1 or COF2) and repression of the integrin signaling through the RHO/ROCK pathway. The polypeptide is Phosphatase and actin regulator 4 (PHACTR4) (Bos taurus (Bovine)).